Here is a 482-residue protein sequence, read N- to C-terminus: Cardiolipin synthase (482 aa).

2 helical membrane-spanning segments follow: residues 4 to 24 and 34 to 54; these read LAYLLVVLLILNVFFAAVTVF and WAWLLVLTFVPIFGFIIYLIF. 2 consecutive PLD phosphodiesterase domains span residues 217 to 244 and 395 to 422; these read LNYRNHRKLAIIDGDISYIGGFNIGDEY and DNGFIHAKTLVVDGEIASVGTANMDFRS. Catalysis depends on residues His-222, Lys-224, Asp-229, His-400, Lys-402, and Asp-407.

It belongs to the phospholipase D family. Cardiolipin synthase subfamily.

The protein localises to the cell membrane. It catalyses the reaction 2 a 1,2-diacyl-sn-glycero-3-phospho-(1'-sn-glycerol) = a cardiolipin + glycerol. Catalyzes the reversible phosphatidyl group transfer from one phosphatidylglycerol molecule to another to form cardiolipin (CL) (diphosphatidylglycerol) and glycerol. This is Cardiolipin synthase (cls) from Listeria welshimeri serovar 6b (strain ATCC 35897 / DSM 20650 / CCUG 15529 / CIP 8149 / NCTC 11857 / SLCC 5334 / V8).